Consider the following 100-residue polypeptide: NADH-quinone oxidoreductase subunit K (100 aa).

The next 3 membrane-spanning stretches (helical) occupy residues 4 to 24 (LQHGLILAAILFILGLTGLVI), 28 to 48 (LLFMLIGLEIMINASALAFVV), and 60 to 80 (VMYILAISLAAAEASIGLALL).

It belongs to the complex I subunit 4L family. NDH-1 is composed of 13 different subunits. Subunits NuoA, H, J, K, L, M, N constitute the membrane sector of the complex.

It is found in the cell inner membrane. The catalysed reaction is a quinone + NADH + 5 H(+)(in) = a quinol + NAD(+) + 4 H(+)(out). NDH-1 shuttles electrons from NADH, via FMN and iron-sulfur (Fe-S) centers, to quinones in the respiratory chain. The immediate electron acceptor for the enzyme in this species is believed to be ubiquinone. Couples the redox reaction to proton translocation (for every two electrons transferred, four hydrogen ions are translocated across the cytoplasmic membrane), and thus conserves the redox energy in a proton gradient. This chain is NADH-quinone oxidoreductase subunit K, found in Shigella sonnei (strain Ss046).